A 788-amino-acid chain; its full sequence is Endonuclease MutS2 (788 aa).

332 to 339 (GPNTGGKT) contributes to the ATP binding site. The 76-residue stretch at 713–788 (VDLRGMDAEE…GTGVTVVEIK (76 aa)) folds into the Smr domain.

Belongs to the DNA mismatch repair MutS family. MutS2 subfamily. Homodimer. Binds to stalled ribosomes, contacting rRNA.

Functionally, endonuclease that is involved in the suppression of homologous recombination and thus may have a key role in the control of bacterial genetic diversity. Its function is as follows. Acts as a ribosome collision sensor, splitting the ribosome into its 2 subunits. Detects stalled/collided 70S ribosomes which it binds and splits by an ATP-hydrolysis driven conformational change. Acts upstream of the ribosome quality control system (RQC), a ribosome-associated complex that mediates the extraction of incompletely synthesized nascent chains from stalled ribosomes and their subsequent degradation. Probably generates substrates for RQC. The polypeptide is Endonuclease MutS2 (Clostridium botulinum (strain 657 / Type Ba4)).